Reading from the N-terminus, the 59-residue chain is U-limacoditoxin(3)-Dv33 (59 aa).

The first 19 residues, 1-19 (MSKVILLCLIFALFACSIS), serve as a signal peptide directing secretion.

Belongs to the limacoditoxin-3 family. The natural peptide is not amidated. The recombinant peptide is amidated. As to expression, expressed by the venom secretory cell of the spine. The spine is a cuticular structure containing a single large nucleated venom-secreting cell at its base. It is an independent unit capable of producing, storing and injecting venom. On the back of D.vulnerans caterpillars, spines are grouped together by 50 to 100 to form scoli, of which there are eight in D.vulnerans.

It is found in the secreted. Probable toxin. Shows a relatively potent antiparasitic activity against the major pathogenic nematode of ruminants (H.contortus, EC(50)=2.6 uM). Does not show insecticidal and antimicrobial activities. Does not induce increase in intracellular calcium in mouse DRG neurons, suggesting that it does not induce pain. The polypeptide is U-limacoditoxin(3)-Dv33 (Doratifera vulnerans (Mottled cup moth)).